The chain runs to 156 residues: Ribonuclease pancreatic (156 aa).

An N-terminal signal peptide occupies residues 1-28 (MALEKSLVRLLLLVLILLVLGWVQPSLG). Over residues 33–43 (AKKFQRQHMDS) the composition is skewed to basic and acidic residues. The interval 33–53 (AKKFQRQHMDSDSSPSSSSTY) is disordered. Residues Lys35 and Arg38 each contribute to the substrate site. His40 functions as the Proton acceptor in the catalytic mechanism. Cystine bridges form between Cys54-Cys112, Cys68-Cys123, Cys86-Cys138, and Cys93-Cys100. Asn62 is a glycosylation site (N-linked (GlcNAc...) asparagine; partial). Substrate-binding positions include 69-73 (KPVNT) and Lys94. N-linked (GlcNAc...) asparagine glycosylation is present at Asn104. Arg113 provides a ligand contact to substrate. Asn116 is a glycosylation site (N-linked (GlcNAc...) asparagine). His147 acts as the Proton donor in catalysis.

Belongs to the pancreatic ribonuclease family. As to quaternary structure, monomer. Interacts with and forms tight 1:1 complexes with RNH1. Dimerization of two such complexes may occur. Interaction with RNH1 inhibits this protein. In terms of processing, N-linked glycans are of complex type. As to expression, pancreas and other tissues and body fluids (indicating it may have other physiological functions besides its role in digestion).

Its subcellular location is the secreted. The enzyme catalyses an [RNA] containing cytidine + H2O = an [RNA]-3'-cytidine-3'-phosphate + a 5'-hydroxy-ribonucleotide-3'-[RNA].. It carries out the reaction an [RNA] containing uridine + H2O = an [RNA]-3'-uridine-3'-phosphate + a 5'-hydroxy-ribonucleotide-3'-[RNA].. Endonuclease that catalyzes the cleavage of RNA on the 3' side of pyrimidine nucleotides. Acts on single-stranded and double-stranded RNA. This Homo sapiens (Human) protein is Ribonuclease pancreatic (RNASE1).